Consider the following 1296-residue polypeptide: Nuclear factor related to kappa-B-binding protein (1296 aa).

The 118-residue stretch at 39–156 folds into the DEUBAD domain; it reads PEDLLEDPEI…LKQILASRSD (118 aa). Disordered regions lie at residues 165–186 and 204–232; these read GPAL…EREW and GDTA…PAVP. Over residues 216–232 the composition is skewed to low complexity; it reads SSWLPSSPARSPSPAVP. A phosphoserine mark is found at Ser-228 and Ser-298. A Glycyl lysine isopeptide (Lys-Gly) (interchain with G-Cter in SUMO2) cross-link involves residue Lys-327. Phosphoserine is present on Ser-351. The tract at residues 370 to 495 is winged-helix like domain; that stretch reads LGINEISSSF…FCKENEDSSD (126 aa). Lys-469 participates in a covalent cross-link: Glycyl lysine isopeptide (Lys-Gly) (interchain with G-Cter in SUMO2). A Glycyl lysine isopeptide (Lys-Gly) (interchain with G-Cter in SUMO1); alternate cross-link involves residue Lys-488. Lys-488 is covalently cross-linked (Glycyl lysine isopeptide (Lys-Gly) (interchain with G-Cter in SUMO2); alternate). Disordered stretches follow at residues 663-758 and 1015-1036; these read QAQA…SSGV and HAAD…PAGT. A compositionally biased stretch (low complexity) spans 700–713; sequence PSEQSQMSLSDSSM. The span at 726–737 shows a compositional bias: pro residues; it reads PALPTPISPPPV. Residues 741 to 758 show a composition bias toward polar residues; sequence NRSGSSTVSEPAQSSSGV. The segment covering 1016–1034 has biased composition (low complexity); the sequence is AADSPAKAPSASVPSSAPA. Ser-1019 carries the post-translational modification Phosphoserine. Lys-1234 carries the post-translational modification N6-acetyllysine. The residue at position 1288 (Ser-1288) is a Phosphoserine.

The protein belongs to the NFRKB family. In terms of assembly, component of the chromatin remodeling INO80 complex; specifically part of a complex module associated with the N-terminus of INO80. Interacts with UCHL5.

Its subcellular location is the nucleus. Binds to the DNA consensus sequence 5'-GGGGAATCTCC-3'. In terms of biological role, putative regulatory component of the chromatin remodeling INO80 complex which is involved in transcriptional regulation, DNA replication and probably DNA repair. Modulates the deubiquitinase activity of UCHL5 in the INO80 complex. The sequence is that of Nuclear factor related to kappa-B-binding protein (Nfrkb) from Mus musculus (Mouse).